We begin with the raw amino-acid sequence, 565 residues long: Putative serine protease pcp-1 (565 aa).

The first 17 residues, 1–17 (MRWFLVLLLVALVSVEA), serve as a signal peptide directing secretion. N69, N107, and N126 each carry an N-linked (GlcNAc...) asparagine glycan. Catalysis depends on S177, which acts as the Charge relay system. 6 N-linked (GlcNAc...) asparagine glycosylation sites follow: N240, N244, N257, N271, N319, and N347. Catalysis depends on charge relay system residues D451 and H479.

This sequence belongs to the peptidase S28 family.

The polypeptide is Putative serine protease pcp-1 (pcp-1) (Caenorhabditis elegans).